Here is a 788-residue protein sequence, read N- to C-terminus: Protein TRS1 (788 aa).

Disordered regions lie at residues 1–82 (MAQR…NFWH) and 610–663 (IHKK…PSRV). The segment covering 16–25 (RGRGAGGPSG) has biased composition (gly residues). The span at 26 to 56 (VGSSPPSSCVPMGATSTAGTGASAAPTATPG) shows a compositional bias: low complexity. The RNA-binding stretch occupies residues 74–248 (SGNNSNFWHG…HGAGEVVRLY (175 aa)). Basic and acidic residues predominate over residues 651-660 (LRRDDEDWKP). The tract at residues 672–788 (LDETFWVLGS…NVATHYHYNA (117 aa)) is interaction with host EIF2AK2/PKR.

The protein belongs to the herpesviridae US22 family. In terms of assembly, interacts with host EIF2AK2/PKR; this interaction retains EIF2AK2 to the host nucleus and prevents its activation. Interaction (via N-terminus) with host BECN1; this interaction inhibits host autophagy. Interacts with the viral DNA polymerase accessory subunit UL44. Interacts with host HSPA5.

The protein resides in the virion. The protein localises to the host cytoplasm. It is found in the host nucleus. Inhibits the establishment of the antiviral state in the infected cell. Prevents the phosphorylation of the host eukaryotic translation initiation factor eIF-2alpha/EIF2S1 and thus the shutoff of viral and cellular protein synthesis by directly interacting with EIF2AK2/PKR. Prevents stress granule formation in response to eIF-2alpha/EIF2S1 phosphorylation, thereby rescuing viral replication and protein synthesis. Also inhibits host autophagy by interacting with host Beclin-1/BECN1. This Human cytomegalovirus (strain Merlin) (HHV-5) protein is Protein TRS1 (TRS1).